The sequence spans 171 residues: L-methionine sulfoximine/L-methionine sulfone acetyltransferase (171 aa).

One can recognise an N-acetyltransferase domain in the interval 1 to 163; the sequence is MTIRFADKAD…DLTFMQLQLD (163 aa). Residues 72–74 and 82–84 contribute to the substrate site; these read RSF and EHS. Residues 85-87, 93-98, asparagine 124, and serine 133 contribute to the acetyl-CoA site; these read VYV and GKGLGR.

In terms of assembly, homodimer.

It carries out the reaction L-methionine sulfoximine + acetyl-CoA = N-acetyl-L-methionine sulfoximine + CoA + H(+). It catalyses the reaction L-methionine sulfone + acetyl-CoA = N-acetyl-L-methionine sulfone + CoA + H(+). Its function is as follows. Plays a role in the resistance against the toxic effects of L-methionine sulfoximine (MSX), a rare amino acid which inhibits glutamine synthetase (GlnA). Catalyzes the acetylation of MSX. It can also use L-methionine sulfone (MSO). Also catalyzes the acylation of free L-amino acids using an acyl-CoA as acyl donor. The polypeptide is L-methionine sulfoximine/L-methionine sulfone acetyltransferase (yncA) (Salmonella typhimurium (strain LT2 / SGSC1412 / ATCC 700720)).